A 181-amino-acid polypeptide reads, in one-letter code: Acireductone dioxygenase (181 aa).

4 residues coordinate Fe(2+): His100, His102, Glu106, and His145. 4 residues coordinate Ni(2+): His100, His102, Glu106, and His145.

It belongs to the acireductone dioxygenase (ARD) family. In terms of assembly, monomer. The cofactor is Fe(2+). Ni(2+) is required as a cofactor.

It carries out the reaction 1,2-dihydroxy-5-(methylsulfanyl)pent-1-en-3-one + O2 = 3-(methylsulfanyl)propanoate + CO + formate + 2 H(+). The catalysed reaction is 1,2-dihydroxy-5-(methylsulfanyl)pent-1-en-3-one + O2 = 4-methylsulfanyl-2-oxobutanoate + formate + 2 H(+). It functions in the pathway amino-acid biosynthesis; L-methionine biosynthesis via salvage pathway; L-methionine from S-methyl-5-thio-alpha-D-ribose 1-phosphate: step 5/6. Its function is as follows. Catalyzes 2 different reactions between oxygen and the acireductone 1,2-dihydroxy-3-keto-5-methylthiopentene (DHK-MTPene) depending upon the metal bound in the active site. Fe-containing acireductone dioxygenase (Fe-ARD) produces formate and 2-keto-4-methylthiobutyrate (KMTB), the alpha-ketoacid precursor of methionine in the methionine recycle pathway. Ni-containing acireductone dioxygenase (Ni-ARD) produces methylthiopropionate, carbon monoxide and formate, and does not lie on the methionine recycle pathway. This Trichodesmium erythraeum (strain IMS101) protein is Acireductone dioxygenase.